Here is a 198-residue protein sequence, read N- to C-terminus: tRNA (pseudouridine(54)-N(1))-methyltransferase (198 aa).

Leu128 contacts S-adenosyl-L-methionine.

This sequence belongs to the methyltransferase superfamily. TrmY family. Homodimer.

It is found in the cytoplasm. It catalyses the reaction pseudouridine(54) in tRNA + S-adenosyl-L-methionine = N(1)-methylpseudouridine(54) in tRNA + S-adenosyl-L-homocysteine + H(+). In terms of biological role, specifically catalyzes the N1-methylation of pseudouridine at position 54 (Psi54) in tRNAs. In Haloferax volcanii (strain ATCC 29605 / DSM 3757 / JCM 8879 / NBRC 14742 / NCIMB 2012 / VKM B-1768 / DS2) (Halobacterium volcanii), this protein is tRNA (pseudouridine(54)-N(1))-methyltransferase.